We begin with the raw amino-acid sequence, 224 residues long: Orotate phosphoribosyltransferase (224 aa).

Residues K26, 73 to 74 (YK), R100, K101, K104, H106, and 127 to 135 (EDVTTAGTS) contribute to the 5-phospho-alpha-D-ribose 1-diphosphate site. Orotate is bound by residues T131 and R160.

The protein belongs to the purine/pyrimidine phosphoribosyltransferase family. PyrE subfamily. As to quaternary structure, homodimer. The cofactor is Mg(2+).

The catalysed reaction is orotidine 5'-phosphate + diphosphate = orotate + 5-phospho-alpha-D-ribose 1-diphosphate. It functions in the pathway pyrimidine metabolism; UMP biosynthesis via de novo pathway; UMP from orotate: step 1/2. Catalyzes the transfer of a ribosyl phosphate group from 5-phosphoribose 1-diphosphate to orotate, leading to the formation of orotidine monophosphate (OMP). The sequence is that of Orotate phosphoribosyltransferase from Clostridium acetobutylicum (strain ATCC 824 / DSM 792 / JCM 1419 / IAM 19013 / LMG 5710 / NBRC 13948 / NRRL B-527 / VKM B-1787 / 2291 / W).